The sequence spans 1910 residues: Chromatin-remodeling ATPase INO80 (1910 aa).

Disordered stretches follow at residues M1–N487, Q548–D611, and N630–D673. Basic and acidic residues predominate over residues G49–H59. Positions G69–Q84 are enriched in pro residues. 3 stretches are compositionally biased toward basic and acidic residues: residues D118–R133, I167–E199, and A222–T231. 2 stretches are compositionally biased toward polar residues: residues S257–S266 and Q311–Q320. Positions A321–R334 are enriched in low complexity. Polar residues predominate over residues Q349 to K362. 2 stretches are compositionally biased toward basic and acidic residues: residues P374–A383 and Q548–D572. Acidic residues predominate over residues D599 to D611. The region spanning I726–T851 is the DBINO domain. Residues L790 to L840 are a coiled coil. A disordered region spans residues A852 to V878. The Helicase ATP-binding domain occupies A1010–S1182. D1023 to T1030 is an ATP binding site. The DEAQ box motif lies at D1133 to Q1136. The Helicase C-terminal domain occupies K1583–L1747. Residues K1760–D1910 are disordered. Over residues V1840 to A1850 the composition is skewed to gly residues. Basic residues predominate over residues A1888 to K1899.

This sequence belongs to the SNF2/RAD54 helicase family. In terms of assembly, component of the INO80 chromatin-remodeling complex.

Its subcellular location is the nucleus. The catalysed reaction is ATP + H2O = ADP + phosphate + H(+). Functionally, ATPase component of the INO80 complex which remodels chromatin by shifting nucleosomes and is involved in DNA repair. This chain is Chromatin-remodeling ATPase INO80 (INO80), found in Mycosarcoma maydis (Corn smut fungus).